The primary structure comprises 390 residues: 1-deoxy-D-xylulose 5-phosphate reductoisomerase (390 aa).

The NADPH site is built by Thr10, Gly11, Ser12, Val13, Gly38, Asn40, and Asn123. Residue Lys124 participates in 1-deoxy-D-xylulose 5-phosphate binding. Position 125 (Glu125) interacts with NADPH. Residue Asp149 coordinates Mn(2+). The 1-deoxy-D-xylulose 5-phosphate site is built by Ser150, Glu151, Ser175, and His198. Glu151 is a Mn(2+) binding site. Gly204 is an NADPH binding site. Residues Ser211, Asn216, Lys217, and Glu220 each coordinate 1-deoxy-D-xylulose 5-phosphate. Glu220 is a Mn(2+) binding site.

The protein belongs to the DXR family. Mg(2+) serves as cofactor. The cofactor is Mn(2+).

It carries out the reaction 2-C-methyl-D-erythritol 4-phosphate + NADP(+) = 1-deoxy-D-xylulose 5-phosphate + NADPH + H(+). It participates in isoprenoid biosynthesis; isopentenyl diphosphate biosynthesis via DXP pathway; isopentenyl diphosphate from 1-deoxy-D-xylulose 5-phosphate: step 1/6. Catalyzes the NADPH-dependent rearrangement and reduction of 1-deoxy-D-xylulose-5-phosphate (DXP) to 2-C-methyl-D-erythritol 4-phosphate (MEP). This Paracoccus denitrificans (strain Pd 1222) protein is 1-deoxy-D-xylulose 5-phosphate reductoisomerase.